The primary structure comprises 444 residues: Putative zinc metalloprotease XF_1047 (444 aa).

Residue His-22 coordinates Zn(2+). Glu-23 is a catalytic residue. His-26 is a binding site for Zn(2+). The helical transmembrane segment at 98-120 (IAIVAAGPLANLLLCMLLLWVLF) threads the bilayer. A PDZ domain is found at 192 to 276 (TLELSKLKQP…DGHPGMIEIR (85 aa)). 2 helical membrane passes run 371–393 (VGWFIYFLSLLSLSLAIINLFPI) and 418–440 (AMAAGQYIGLALLAGLMGLAFYN).

It belongs to the peptidase M50B family. The cofactor is Zn(2+).

It is found in the cell inner membrane. The protein is Putative zinc metalloprotease XF_1047 of Xylella fastidiosa (strain 9a5c).